The sequence spans 445 residues: von Willebrand factor A domain-containing protein 1 (445 aa).

The signal sequence occupies residues 1 to 22 (MLPWTALGLALSLRLALARSGA). A VWFA domain is found at 34 to 213 (DLMFLLDSSA…ELRGSILDAM (180 aa)). Serine 74 and serine 80 each carry phosphoserine; by FAM20C. Position 83 is a phosphotyrosine (tyrosine 83). The residue at position 93 (serine 93) is a Phosphoserine; by FAM20C. Residues 214 to 304 (RPQQLHATEI…QILRVRTRPG (91 aa)) enclose the Fibronectin type-III 1 domain. Residue asparagine 264 is glycosylated (N-linked (GlcNAc...) asparagine). 2 disordered regions span residues 302-325 (RPGE…TQLA) and 411-445 (RESA…SREP). Residues 311 to 325 (SGPESGAGPAPTQLA) are compositionally biased toward low complexity. The region spanning 334–427 (GPERIVISHA…KACTPDGPRP (94 aa)) is the Fibronectin type-III 2 domain.

As to quaternary structure, homodimer or homomultimer; disulfide-linked. Interacts with HSPG2. N-glycosylated.

It is found in the secreted. It localises to the extracellular space. Its subcellular location is the extracellular matrix. The protein localises to the basement membrane. Functionally, promotes matrix assembly. Involved in the organization of skeletal muscles and in the formation of neuromuscular junctions. This is von Willebrand factor A domain-containing protein 1 from Homo sapiens (Human).